The following is a 200-amino-acid chain: Molybdenum cofactor guanylyltransferase (200 aa).

GTP contacts are provided by residues 15–17 (LSG), Lys28, Asp74, and Asp104. Asp104 provides a ligand contact to Mg(2+).

It belongs to the MobA family. Monomer. It depends on Mg(2+) as a cofactor.

Its subcellular location is the cytoplasm. It carries out the reaction Mo-molybdopterin + GTP + H(+) = Mo-molybdopterin guanine dinucleotide + diphosphate. In terms of biological role, transfers a GMP moiety from GTP to Mo-molybdopterin (Mo-MPT) cofactor (Moco or molybdenum cofactor) to form Mo-molybdopterin guanine dinucleotide (Mo-MGD) cofactor. This Pseudomonas fluorescens (strain SBW25) protein is Molybdenum cofactor guanylyltransferase.